Consider the following 250-residue polypeptide: Archaeal flagellar motor scaffold protein FlaX (250 aa).

The Extracellular segment spans residues 1-9; sequence MAIQDLLQS. The helical transmembrane segment at 10 to 30 threads the bilayer; that stretch reads SLFIILIGVGIPIAAFLEILF. Residues 31 to 250 are Cytoplasmic-facing; the sequence is RVILPKTKRV…MILEGGGVNG (220 aa). Over residues 42–61 the composition is skewed to polar residues; the sequence is TQQSPQNISQEQRFPTQQKP. Positions 42–72 are disordered; sequence TQQSPQNISQEQRFPTQQKPANDETSKYSSD. A compositionally biased stretch (basic and acidic residues) spans 62-72; that stretch reads ANDETSKYSSD.

In terms of assembly, the S.acidocaldarius archaellum assembly machinery and its filament consist of seven proteins (FlaB, FlaF, FlaG, FlaH, FlaI, FlaJ and FlaX). FlaX assembles into ring-shaped oligomers. Interacts directly with FlaH and the motor ATPase FlaI.

It localises to the archaeal flagellum. Its subcellular location is the cell membrane. Its activity is regulated as follows. The presence of the flagellar core components FlaH, FlaI and FlaJ seems to be crucial for the stability of FlaX. Component of the archaellum. FlaX, FlaH and FlaI form the core cytoplasmic motor complex of the crenarchaeal archaellum. FlaX forms a ring that may act as a membrane-bound cytoplasmic scaffold that guides the assembly of the archaellum motor complex. Is essential for archaellum assembly. This is Archaeal flagellar motor scaffold protein FlaX from Sulfolobus acidocaldarius (strain ATCC 33909 / DSM 639 / JCM 8929 / NBRC 15157 / NCIMB 11770).